The sequence spans 249 residues: MESIVVSNWKMHFSFSEACNYLNLITSLNSNLNLAKMIFAVPNLYLSGLKLKFNDTYHFSAQDVSMITESSGPYTGEISASMLKNLNVNYAIVGHSERRLLFYEDANTIALKVRNCINNAIVPIVCIGEPIEARKNKTYLQYLAQQLSSISFSFTKNVIIAYEPIWSIGSDMIPTIDDIYEVVTMIREIQNRYIPHNIENSVKIVYGGSVSANNIHQILTAGVDGVLIGKASLKLESLTTIIKTVQGLD.

Substrate is bound at residue 8 to 10 (NWK). The active-site Electrophile is His-95. Residue Glu-163 is the Proton acceptor of the active site. The substrate site is built by Gly-169 and Ser-209.

This sequence belongs to the triosephosphate isomerase family. As to quaternary structure, homodimer.

The protein localises to the cytoplasm. The catalysed reaction is D-glyceraldehyde 3-phosphate = dihydroxyacetone phosphate. The protein operates within carbohydrate biosynthesis; gluconeogenesis. It functions in the pathway carbohydrate degradation; glycolysis; D-glyceraldehyde 3-phosphate from glycerone phosphate: step 1/1. Its function is as follows. Involved in the gluconeogenesis. Catalyzes stereospecifically the conversion of dihydroxyacetone phosphate (DHAP) to D-glyceraldehyde-3-phosphate (G3P). The chain is Triosephosphate isomerase from Orientia tsutsugamushi (strain Ikeda) (Rickettsia tsutsugamushi).